Here is a 235-residue protein sequence, read N- to C-terminus: Secretory carrier-associated membrane protein 5 (235 aa).

Topologically, residues 1–39 (MAEKVNNFPPLPKFIPLKPCFYQDFEADIPPQHVSMTKR) are cytoplasmic. Residues 40–60 (LYYLWMLNSVTLAVNLVGCLA) form a helical membrane-spanning segment. At 61–67 (WLIGGGG) the chain is on the extracellular side. Residues 68–88 (ATNFGLAFLWLILFTPCSYVC) form a helical membrane-spanning segment. At 89 to 102 (WFRPIYKAFKTDSS) the chain is on the cytoplasmic side. A helical transmembrane segment spans residues 103-125 (FSFMAFFFTFMAQLVISIIQAVG). At 126–148 (IPGWGVCGWIATISFFGTNIGSA) the chain is on the extracellular side. The chain crosses the membrane as a helical span at residues 149–169 (VVMLIPTVMFTVMAVFSFIAL). Residues 170–235 (SMVHKFYRGS…TPNYTYSNEM (66 aa)) lie on the Cytoplasmic side of the membrane.

Belongs to the SCAMP family. SCAMP5 subfamily. As to quaternary structure, interacts (via C-terminal part) with SYT1 and SYT2; interaction with synaptotagmins making a link with the SNARE molecules. Interacts with SLC9A7. As to expression, expressed both by neuronal and non-neuronal tissues. Expressed in brain, stomach, thyroid, spinal cord, lymph node, trachea, adrenal gland, bone marrow and in the different parts of brain. In thyroid tissues, it is expressed by the follicular epithelial cells. In the adrenal gland tissues it is detected in the zona fasciculata of the cortex region (at protein level).

The protein resides in the cell membrane. It localises to the golgi apparatus membrane. The protein localises to the golgi apparatus. Its subcellular location is the trans-Golgi network membrane. It is found in the recycling endosome membrane. The protein resides in the cytoplasmic vesicle. It localises to the secretory vesicle. The protein localises to the synaptic vesicle membrane. Its function is as follows. Required for the calcium-dependent exocytosis of signal sequence-containing cytokines such as CCL5. Probably acts in cooperation with the SNARE machinery. May play a role in accumulation of expanded polyglutamine (polyQ) protein huntingtin (HTT) in case of endoplasmic reticulum stress by inhibiting the endocytosis pathway. The sequence is that of Secretory carrier-associated membrane protein 5 (SCAMP5) from Homo sapiens (Human).